A 133-amino-acid chain; its full sequence is Profilin-1 (133 aa).

Cys-95 and Cys-117 form a disulfide bridge.

It belongs to the profilin family. Dimer and tetramer. Occurs in many kinds of cells as a complex with monomeric actin in a 1:1 ratio.

The protein localises to the cytoplasm. The protein resides in the cytoskeleton. Functionally, binds to actin and affects the structure of the cytoskeleton. At high concentrations, profilin prevents the polymerization of actin, whereas it enhances it at low concentrations. By binding to PIP2, it inhibits the formation of IP3 and DG. Possesses high binding affinity for poly(L-proline). The polypeptide is Profilin-1 (Artemisia vulgaris (Mugwort)).